A 348-amino-acid chain; its full sequence is MIETDRIISANTVQTKDENSIDRAIRPKTLAEYEGQPAVREQMEIFIQAAKSRKDALDHTLIFGPPGLGKTTLSNIIANEMEVELKQTSGPVLEKAGDLAALLTNLEENDVLFIDEIHRLSPVIEEILYPAMEDYQLDIMIGEGPAARSIKIDLPPFTLVGATTRAGLLTSPLRDRFGIIQRLEFYSVDDLAKIVYRSAKLLDLDITDDGANEIAKRSRGTPRIANRLLRRVRDYAQVKASGVISYDIADKALTMLKVDPVGFDHMDHKYLLTLMEKFGGGPVGLDTMAAALSEEKGTIEDVIEPYLIQQGYLMRTARGRIATLLAYNHFKLKIPDSLSSDQQQNLSL.

Positions 4-186 are large ATPase domain (RuvB-L); that stretch reads TDRIISANTV…FGIIQRLEFY (183 aa). Residues isoleucine 25, arginine 26, glycine 67, lysine 70, threonine 71, threonine 72, 133–135, arginine 176, tyrosine 186, and arginine 223 contribute to the ATP site; that span reads EDY. Threonine 71 is a binding site for Mg(2+). The interval 187–257 is small ATPAse domain (RuvB-S); sequence SVDDLAKIVY…IADKALTMLK (71 aa). The head domain (RuvB-H) stretch occupies residues 260–348; sequence PVGFDHMDHK…SSDQQQNLSL (89 aa). 2 residues coordinate DNA: arginine 315 and arginine 320.

The protein belongs to the RuvB family. As to quaternary structure, homohexamer. Forms an RuvA(8)-RuvB(12)-Holliday junction (HJ) complex. HJ DNA is sandwiched between 2 RuvA tetramers; dsDNA enters through RuvA and exits via RuvB. An RuvB hexamer assembles on each DNA strand where it exits the tetramer. Each RuvB hexamer is contacted by two RuvA subunits (via domain III) on 2 adjacent RuvB subunits; this complex drives branch migration. In the full resolvosome a probable DNA-RuvA(4)-RuvB(12)-RuvC(2) complex forms which resolves the HJ.

The protein resides in the cytoplasm. It catalyses the reaction ATP + H2O = ADP + phosphate + H(+). In terms of biological role, the RuvA-RuvB-RuvC complex processes Holliday junction (HJ) DNA during genetic recombination and DNA repair, while the RuvA-RuvB complex plays an important role in the rescue of blocked DNA replication forks via replication fork reversal (RFR). RuvA specifically binds to HJ cruciform DNA, conferring on it an open structure. The RuvB hexamer acts as an ATP-dependent pump, pulling dsDNA into and through the RuvAB complex. RuvB forms 2 homohexamers on either side of HJ DNA bound by 1 or 2 RuvA tetramers; 4 subunits per hexamer contact DNA at a time. Coordinated motions by a converter formed by DNA-disengaged RuvB subunits stimulates ATP hydrolysis and nucleotide exchange. Immobilization of the converter enables RuvB to convert the ATP-contained energy into a lever motion, pulling 2 nucleotides of DNA out of the RuvA tetramer per ATP hydrolyzed, thus driving DNA branch migration. The RuvB motors rotate together with the DNA substrate, which together with the progressing nucleotide cycle form the mechanistic basis for DNA recombination by continuous HJ branch migration. Branch migration allows RuvC to scan DNA until it finds its consensus sequence, where it cleaves and resolves cruciform DNA. The protein is Holliday junction branch migration complex subunit RuvB of Francisella philomiragia subsp. philomiragia (strain ATCC 25017 / CCUG 19701 / FSC 153 / O#319-036).